A 594-amino-acid polypeptide reads, in one-letter code: DEAD-box ATP-dependent RNA helicase 25 (594 aa).

Disordered stretches follow at residues 56 to 80 (RSGG…EEGL) and 92 to 121 (GVRE…VDGS). The Q motif signature appears at 126–154 (TRFDQCTISPLSLKAVKDAGYERMTQVQE). A Helicase ATP-binding domain is found at 157 to 340 (LPVILQGKDV…HIAMKKNYKF (184 aa)). Residue 170–177 (AKTGTGKT) coordinates ATP. The DEAD box motif lies at 288-291 (DEAD). Positions 370–520 (ILYDVLKKHV…SVDSSTQTIV (151 aa)) constitute a Helicase C-terminal domain.

It belongs to the DEAD box helicase family.

It catalyses the reaction ATP + H2O = ADP + phosphate + H(+). The protein is DEAD-box ATP-dependent RNA helicase 25 of Oryza sativa subsp. japonica (Rice).